The primary structure comprises 292 residues: Protein LRATD1 (292 aa).

The residue at position 38 (Ser-38) is a Phosphoserine. Residues 133–228 form the LRAT domain; that stretch reads PATEQPAPAP…CRFGKREFKA (96 aa).

This sequence belongs to the LRATD family.

The protein localises to the cytoplasm. In terms of biological role, may play a role in cell morphology and motility. The polypeptide is Protein LRATD1 (Mus musculus (Mouse)).